A 106-amino-acid polypeptide reads, in one-letter code: UPF0060 membrane protein Oant_2511 (106 aa).

The next 4 membrane-spanning stretches (helical) occupy residues 3–23, 30–50, 60–80, and 84–104; these read FAIY…FWAW, PLWL…LTLI, AAYG…AEGA, and RWDV…LFAP.

This sequence belongs to the UPF0060 family.

Its subcellular location is the cell inner membrane. The polypeptide is UPF0060 membrane protein Oant_2511 (Brucella anthropi (strain ATCC 49188 / DSM 6882 / CCUG 24695 / JCM 21032 / LMG 3331 / NBRC 15819 / NCTC 12168 / Alc 37) (Ochrobactrum anthropi)).